The primary structure comprises 421 residues: GTPase Obg (421 aa).

The Obg domain maps to Met-1 to Leu-158. Residues Ala-21–Asp-40 are disordered. Residues Ala-159 to Asp-328 enclose the OBG-type G domain. GTP contacts are provided by residues Gly-165–Ser-172, Phe-190–Glu-194, Asp-211–Gly-214, Asn-281–Asp-284, and Ser-309–Ala-311. Residues Ser-172 and Thr-192 each contribute to the Mg(2+) site. Residues Phe-344–Glu-421 enclose the OCT domain.

This sequence belongs to the TRAFAC class OBG-HflX-like GTPase superfamily. OBG GTPase family. In terms of assembly, monomer. Requires Mg(2+) as cofactor.

Its subcellular location is the cytoplasm. Functionally, an essential GTPase which binds GTP, GDP and possibly (p)ppGpp with moderate affinity, with high nucleotide exchange rates and a fairly low GTP hydrolysis rate. Plays a role in control of the cell cycle, stress response, ribosome biogenesis and in those bacteria that undergo differentiation, in morphogenesis control. The protein is GTPase Obg of Finegoldia magna (strain ATCC 29328 / DSM 20472 / WAL 2508) (Peptostreptococcus magnus).